Reading from the N-terminus, the 287-residue chain is Small ribosomal subunit protein uS10m (287 aa).

Residues 1–33 (MSLFSPHRILLRTGSAFQLATATRALLSTSSQL) constitute a mitochondrion transit peptide. The span at 33–43 (LRNTKNAQSGL) shows a compositional bias: polar residues. A disordered region spans residues 33–84 (LRNTKNAQSGLAEQARAEEPVASSPSQTTRPEQKSLEEETTKQTQTHADSTV). Basic and acidic residues predominate over residues 63–73 (PEQKSLEEETT). Residues 74-84 (KQTQTHADSTV) are compositionally biased toward polar residues.

This sequence belongs to the universal ribosomal protein uS10 family. Part of the mitochondrial small ribosomal subunit.

Its subcellular location is the mitochondrion. Its function is as follows. Involved in mitochondrial genome encoded proteins translation. Involved in the binding of tRNA to the ribosomes. This chain is Small ribosomal subunit protein uS10m (rsm10), found in Emericella nidulans (strain FGSC A4 / ATCC 38163 / CBS 112.46 / NRRL 194 / M139) (Aspergillus nidulans).